A 128-amino-acid polypeptide reads, in one-letter code: MRHRLSGRQLNRNASHRQAMFRNMASSLVRHEIIKTTLPKAKELRRVVEPLITLAKSDSVANRRLAFARTRDRDVVGKLFTELGPRFQGRPGGYTRILKCGFRAGDNAPMAYIELVGRPVDAEAVTEE.

It belongs to the bacterial ribosomal protein bL17 family. In terms of assembly, part of the 50S ribosomal subunit. Contacts protein L32.

In Tolumonas auensis (strain DSM 9187 / NBRC 110442 / TA 4), this protein is Large ribosomal subunit protein bL17.